Reading from the N-terminus, the 859-residue chain is ATP-dependent RNA helicase DDX24 (859 aa).

At K17 the chain carries N6-acetyllysine. S60 carries the phosphoserine modification. Residues P61 to K175 are disordered. N6-acetyllysine is present on K71. S82 and S94 each carry phosphoserine. A compositionally biased stretch (acidic residues) spans S82 to E91. The segment covering P95 to K105 has biased composition (basic residues). The segment covering N106–Q115 has biased composition (polar residues). A Q motif motif is present at residues S192–V220. The region spanning A224 to K528 is the Helicase ATP-binding domain. Position 237 to 244 (A237 to T244) interacts with ATP. The tract at residues N262–D374 is disordered. The segment covering T277–A293 has biased composition (basic and acidic residues). S287 and S295 each carry phosphoserine. A compositionally biased stretch (acidic residues) spans E294–I304. The residue at position 302 (T302) is a Phosphothreonine. Residue K370 forms a Glycyl lysine isopeptide (Lys-Gly) (interchain with G-Cter in SUMO2) linkage. The short motif at D471–D474 is the DEAD box element. The 146-residue stretch at Y578–D723 folds into the Helicase C-terminal domain. Glycyl lysine isopeptide (Lys-Gly) (interchain with G-Cter in SUMO2) cross-links involve residues K624, K808, and K825. 2 stretches are compositionally biased toward polar residues: residues P799–G814 and P823–S834. Positions P799 to N859 are disordered.

It belongs to the DEAD box helicase family. DDX24/MAK5 subfamily. Interacts with FADD. Interacts with RIPK1; this interaction disrupts RLR signaling activation of IFN-dependent transcription factor IRF7. Interacts with NIP7. Interacts with EP300; this interaction prevents TP53 acetylation mediated by EP300. Ubiquitinated by MDM2 without targeting DDX24 for proteasomal degradation. Instead, polyubiquitylated DDX24 promotes interaction with NIP7, a component of pre-rRNP processing complex, and associates with pre-rRNA molecules and pre-ribosomal particles.

The protein localises to the cytoplasm. Its subcellular location is the nucleus. The catalysed reaction is ATP + H2O = ADP + phosphate + H(+). Its function is as follows. ATP-dependent RNA helicase that plays a role in various aspects of RNA metabolism including pre-mRNA splicing and is thereby involved in different biological processes such as cell cycle regulation or innate immunity. Plays an inhibitory role in TP53 transcriptional activity and subsequently in TP53 controlled cell growth arrest and senescence by inhibiting its EP300 mediated acetylation. Negatively regulates cytosolic RNA-mediated innate immune signaling at least in part by affecting RIPK1/IRF7 interactions. Alternatively, possesses antiviral activity by recognizing gammaherpesvirus transcripts in the context of lytic reactivation. Plays an essential role in cell cycle regulation in vascular smooth muscle cells by interacting with and regulating FANCA (Fanconi anemia complementation group A) mRNA. The polypeptide is ATP-dependent RNA helicase DDX24 (DDX24) (Pongo abelii (Sumatran orangutan)).